The sequence spans 37 residues: Large ribosomal subunit protein bL12 (37 aa).

This sequence belongs to the bacterial ribosomal protein bL12 family. As to quaternary structure, homodimer. Part of the ribosomal stalk of the 50S ribosomal subunit. Forms a multimeric L10(L12)X complex, where L10 forms an elongated spine to which 2 to 4 L12 dimers bind in a sequential fashion. Binds GTP-bound translation factors.

Functionally, forms part of the ribosomal stalk which helps the ribosome interact with GTP-bound translation factors. Is thus essential for accurate translation. The sequence is that of Large ribosomal subunit protein bL12 (rplL) from Clostridium pasteurianum.